The chain runs to 318 residues: Protoheme IX farnesyltransferase (318 aa).

The next 9 membrane-spanning stretches (helical) occupy residues 29–49, 51–71, 102–122, 123–143, 151–171, 179–199, 219–239, 241–261, and 280–300; these read IIPL…QGQV, PVLL…AQTI, LIFA…FANL, LAAS…THWL, IVIG…AVTG, LIFA…ALMI, ATVK…LLLV, PLHS…AVFI, and LFLY…IDSL.

The protein belongs to the UbiA prenyltransferase family. Protoheme IX farnesyltransferase subfamily.

Its subcellular location is the cell inner membrane. The enzyme catalyses heme b + (2E,6E)-farnesyl diphosphate + H2O = Fe(II)-heme o + diphosphate. It participates in porphyrin-containing compound metabolism; heme O biosynthesis; heme O from protoheme: step 1/1. Functionally, converts heme B (protoheme IX) to heme O by substitution of the vinyl group on carbon 2 of heme B porphyrin ring with a hydroxyethyl farnesyl side group. This Trichormus variabilis (strain ATCC 29413 / PCC 7937) (Anabaena variabilis) protein is Protoheme IX farnesyltransferase.